A 1387-amino-acid polypeptide reads, in one-letter code: Kinesin-like protein KIF15 (1387 aa).

The segment at 1-23 (MAPGCKSELRNVTNSHSNQPSNE) is disordered. Positions 10–22 (RNVTNSHSNQPSN) are enriched in polar residues. The 338-residue stretch at 26–363 (AIKVFVRIRP…LNFAQRAKLI (338 aa)) folds into the Kinesin motor domain. 109–116 (GQTGSGKT) serves as a coordination point for ATP. A coiled-coil region spans residues 368–1132 (VVNEDTQGNV…LKMRQLEHVM (765 aa)). S568 carries the phosphoserine modification. K1009 is modified (N6-acetyllysine). Residues S1141 and S1169 each carry the phosphoserine modification.

The protein belongs to the TRAFAC class myosin-kinesin ATPase superfamily. Kinesin family. KLP2 subfamily. In terms of assembly, interacts with MKI67 and TPX2. In terms of tissue distribution, expressed in brain (neurons in the external germinal layer of the cerebellum and in ventricular zones) (at protein level). Expressed in spleen and testis.

The protein localises to the cytoplasm. The protein resides in the cytoskeleton. It is found in the spindle. Functionally, plus-end directed kinesin-like motor enzyme involved in mitotic spindle assembly. This Mus musculus (Mouse) protein is Kinesin-like protein KIF15 (Kif15).